A 210-amino-acid polypeptide reads, in one-letter code: Imidazoleglycerol-phosphate dehydratase (210 aa).

Residues 185–210 form a disordered region; sequence PRRGGSIPSSKGVLEQAGDNNTEKSK.

It belongs to the imidazoleglycerol-phosphate dehydratase family.

The protein localises to the cytoplasm. It carries out the reaction D-erythro-1-(imidazol-4-yl)glycerol 3-phosphate = 3-(imidazol-4-yl)-2-oxopropyl phosphate + H2O. It participates in amino-acid biosynthesis; L-histidine biosynthesis; L-histidine from 5-phospho-alpha-D-ribose 1-diphosphate: step 6/9. This is Imidazoleglycerol-phosphate dehydratase from Prochlorococcus marinus (strain SARG / CCMP1375 / SS120).